A 169-amino-acid polypeptide reads, in one-letter code: Ribosome maturation factor RimM (169 aa).

The PRC barrel domain occupies 97–169 (EDEVYFKDLI…KIVVDWEYDY (73 aa)).

Belongs to the RimM family. In terms of assembly, binds ribosomal protein uS19.

Its subcellular location is the cytoplasm. In terms of biological role, an accessory protein needed during the final step in the assembly of 30S ribosomal subunit, possibly for assembly of the head region. Essential for efficient processing of 16S rRNA. May be needed both before and after RbfA during the maturation of 16S rRNA. It has affinity for free ribosomal 30S subunits but not for 70S ribosomes. The polypeptide is Ribosome maturation factor RimM (Francisella tularensis subsp. holarctica (strain FTNF002-00 / FTA)).